A 164-amino-acid polypeptide reads, in one-letter code: Ribonuclease H (164 aa).

One can recognise an RNase H type-1 domain in the interval 9–150 (DMPRVTIYTD…ADTLANAATD (142 aa)). Residues D18, E56, D78, and D142 each contribute to the Mg(2+) site.

Belongs to the RNase H family. Monomer. It depends on Mg(2+) as a cofactor.

The protein resides in the cytoplasm. It carries out the reaction Endonucleolytic cleavage to 5'-phosphomonoester.. Endonuclease that specifically degrades the RNA of RNA-DNA hybrids. This is Ribonuclease H from Chromohalobacter salexigens (strain ATCC BAA-138 / DSM 3043 / CIP 106854 / NCIMB 13768 / 1H11).